A 361-amino-acid chain; its full sequence is Carbamoyl phosphate synthase small chain (361 aa).

The interval 1-173 (MRAALALEDG…SVREEYRFSD (173 aa)) is CPSase. The L-glutamine site is built by serine 45, glycine 225, and glycine 227. The Glutamine amidotransferase type-1 domain maps to 177-361 (EIVVIDCGVK…DEFLAMCREH (185 aa)). Cysteine 252 serves as the catalytic Nucleophile. Residues leucine 253, glutamine 256, asparagine 294, glycine 296, and phenylalanine 297 each contribute to the L-glutamine site. Residues histidine 337 and glutamate 339 contribute to the active site.

It belongs to the CarA family. Composed of two chains; the small (or glutamine) chain promotes the hydrolysis of glutamine to ammonia, which is used by the large (or ammonia) chain to synthesize carbamoyl phosphate. Tetramer of heterodimers (alpha,beta)4.

It carries out the reaction hydrogencarbonate + L-glutamine + 2 ATP + H2O = carbamoyl phosphate + L-glutamate + 2 ADP + phosphate + 2 H(+). The enzyme catalyses L-glutamine + H2O = L-glutamate + NH4(+). It participates in amino-acid biosynthesis; L-arginine biosynthesis; carbamoyl phosphate from bicarbonate: step 1/1. Its pathway is pyrimidine metabolism; UMP biosynthesis via de novo pathway; (S)-dihydroorotate from bicarbonate: step 1/3. Small subunit of the glutamine-dependent carbamoyl phosphate synthetase (CPSase). CPSase catalyzes the formation of carbamoyl phosphate from the ammonia moiety of glutamine, carbonate, and phosphate donated by ATP, constituting the first step of 2 biosynthetic pathways, one leading to arginine and/or urea and the other to pyrimidine nucleotides. The small subunit (glutamine amidotransferase) binds and cleaves glutamine to supply the large subunit with the substrate ammonia. The chain is Carbamoyl phosphate synthase small chain from Methanopyrus kandleri (strain AV19 / DSM 6324 / JCM 9639 / NBRC 100938).